The sequence spans 365 residues: tRNA/tmRNA (uracil-C(5))-methyltransferase (365 aa).

Residues Gln189, Tyr217, Asn222, Glu238, and Asp298 each contribute to the S-adenosyl-L-methionine site. The active-site Nucleophile is the Cys323. Glu357 functions as the Proton acceptor in the catalytic mechanism.

The protein belongs to the class I-like SAM-binding methyltransferase superfamily. RNA M5U methyltransferase family. TrmA subfamily.

It carries out the reaction uridine(54) in tRNA + S-adenosyl-L-methionine = 5-methyluridine(54) in tRNA + S-adenosyl-L-homocysteine + H(+). It catalyses the reaction uridine(341) in tmRNA + S-adenosyl-L-methionine = 5-methyluridine(341) in tmRNA + S-adenosyl-L-homocysteine + H(+). In terms of biological role, dual-specificity methyltransferase that catalyzes the formation of 5-methyluridine at position 54 (m5U54) in all tRNAs, and that of position 341 (m5U341) in tmRNA (transfer-mRNA). This is tRNA/tmRNA (uracil-C(5))-methyltransferase from Shewanella baltica (strain OS185).